The chain runs to 633 residues: DNA mismatch repair protein MutL (633 aa).

Residues 338 to 407 form a disordered region; that stretch reads AAPEPERTLP…VPPPTLRAIP (70 aa). A compositionally biased stretch (low complexity) spans 366–391; the sequence is PGSAFPAAARPAPASSAAQPPLSSSA.

This sequence belongs to the DNA mismatch repair MutL/HexB family.

This protein is involved in the repair of mismatches in DNA. It is required for dam-dependent methyl-directed DNA mismatch repair. May act as a 'molecular matchmaker', a protein that promotes the formation of a stable complex between two or more DNA-binding proteins in an ATP-dependent manner without itself being part of a final effector complex. The protein is DNA mismatch repair protein MutL of Akkermansia muciniphila (strain ATCC BAA-835 / DSM 22959 / JCM 33894 / BCRC 81048 / CCUG 64013 / CIP 107961 / Muc).